Consider the following 618-residue polypeptide: MTKKLPSELKQTRKSIQTACEFCHTKHIQCDVGRPCQNCLKRNIGKFCRDKKRKSRKRIEKHGTQPYLNLGKRLVIHDVPSKTVSPSSVHLQRDFLSSDQEKPGKTPAHNTNIQYTYNINDNFQSAGSIPRITNFNTDNGQTVLENTSNNISASQAVHLMNDPIIPTVRKSTLNLKSHFLEQHKAMQQPLATNCLVATSNVPVHSGMDTSNKSDDDVDDETNIHFDSMWCNDEYMKLKDIVDISTPFLPNNSQIFSLQESEYPNPSASTRGNSSLHLTNLLNSTKSVNDQKDSSIGHSTSTFNTYDEVVSRPFISLDMLHLNRGANANTHPSHNAKLESECDSSSHSDADLEKHDTDFISPSKFRELVKTPQDLYDNKCLIKPHNYKLAYTKLLTTLRKKFLEGAEIDKSVSVKDEHSTQKHNLRYDLEVIIRSILERYAPIFISLTSNMIEEDLLLQEVTLQRALLDLENMAKLVSCTPMCIWRRSGEICFVSNEFYSLTGFNKNLLLDRTSFIFEYLDHKSVSNYFQIFNELLAFGYNDINKRKKLLMLNACSSTSSKITEGFSFTTDGKAIFTKCNLLLSNGLYLKCACCWTVKRDSFNIPILVMGQFLPIFEMD.

The segment at residues 20 to 48 (CEFCHTKHIQCDVGRPCQNCLKRNIGKFC) is a DNA-binding region (zn(2)-C6 fungal-type). The interval 325 to 352 (ANANTHPSHNAKLESECDSSSHSDADLE) is disordered. Residues 335–352 (AKLESECDSSSHSDADLE) are compositionally biased toward basic and acidic residues. The region spanning 466-538 (LLDLENMAKL…QIFNELLAFG (73 aa)) is the PAS domain.

The protein belongs to the ERT1/acuK family.

The protein resides in the nucleus. Functionally, transcription factor which regulates nonfermentable carbon utilization. Binds specifically to 5'-CGGN(8)CGG-3' and 5'-CGGN(9)CGG-3' sequences in the promoter region. In Saccharomyces cerevisiae (strain YJM789) (Baker's yeast), this protein is Glucose starvation modulator protein 1 (GSM1).